We begin with the raw amino-acid sequence, 231 residues long: DNA mismatch repair protein MutH (231 aa).

The protein belongs to the MutH family.

The protein localises to the cytoplasm. Functionally, sequence-specific endonuclease that cleaves unmethylated GATC sequences. It is involved in DNA mismatch repair. The chain is DNA mismatch repair protein MutH from Klebsiella pneumoniae subsp. pneumoniae (strain ATCC 700721 / MGH 78578).